An 81-amino-acid polypeptide reads, in one-letter code: Gamma-conotoxin-like TeA53 (81 aa).

An N-terminal signal peptide occupies residues 1 to 19 (MQKLTILLLVAAVLMSTQA). A propeptide spanning residues 20–42 (LNQEQHQRAKINLLSKRKPPAER) is cleaved from the precursor. Cystine bridges form between Cys49-Cys63, Cys56-Cys67, and Cys62-Cys72.

The protein belongs to the conotoxin O2 superfamily. As to expression, expressed by the venom duct.

Its subcellular location is the secreted. In terms of biological role, gamma-conotoxins may act on voltage-gated non-specific cation pacemaker channels (HCN). The sequence is that of Gamma-conotoxin-like TeA53 from Conus textile (Cloth-of-gold cone).